The following is a 190-amino-acid chain: MSSPGGSQQVEWVFIPVIKDVTYEFKVDNNDNITELYVNGNKLGPASSLEMDFYFDVDVSNNQVRKFNNVFVLFGVIATKDSNKIKMQLTLNPCDFVRGFVFPSQDPSQLNNIFASNNKVSVSEKAFAILNRKKEGAVSSTINVYITQNTYTGNTKIEKIQQNTIIIEKNTGIVFKIPNDMLNIFRYSTT.

Belongs to the CRISPR system Cmr7 family. Homodimer.

CRISPR (clustered regularly interspaced short palindromic repeat) is an adaptive immune system that provides protection against mobile genetic elements (viruses, transposable elements and conjugative plasmids). CRISPR clusters contain spacers, sequences complementary to antecedent mobile elements, and target invading nucleic acids. CRISPR clusters are transcribed and processed into CRISPR RNA (crRNA). This Saccharolobus solfataricus (strain ATCC 35092 / DSM 1617 / JCM 11322 / P2) (Sulfolobus solfataricus) protein is Putative CRISPR system CMR subunit Cmr7 2 (cmr7b).